A 544-amino-acid polypeptide reads, in one-letter code: MAAKDVKFGGDARQRMLRGVDILADAVKVTLGPKGRNVVIDKSFGAPRITKDGVSVAKEIELADKFENMGAQMVREVASKTNDKAGDGTTTATVLTQAIVREGAKAVAAGLNPMDLKRGIDKAVAVVIEDLKANSRKITNPSETAQVGTISANGESEIGRMISEAMQKVGNEGVITVEEAKGIQTELDVVEGMQFDRGYVSPYFITNPEKMIAELDNPYILIHEKKLAQLQPLLPLLESVVQSGRPLLIIAEDVEGEALATLVVNKLRGGLKIAAVKAPGFGDRRKAMLEDIAILTGGTVISEDLGIKLETVTLQQLGTAKRVLIEKENTTIVEGAGSPDDIKGRCSQIRAQAEETTSDYDREKLQERLAKLAGGVAVIRVGGSTEVEVKERKDRVDDALHATRAAVEEGIVPGGGVALARASLKLADLGYDNGDQKVGIEIIRRALQSPLRQISENAGEDGAVIAGKVLENGTYNFGFDAQTGEFKDLVSAGIIDPAKVVRTALQDAASVAALLITTEAMIAEKPEKKAPAGAPPGGMGDMDF.

ATP contacts are provided by residues threonine 30–proline 33, lysine 51, aspartate 87–threonine 91, glycine 415, and aspartate 496.

The protein belongs to the chaperonin (HSP60) family. As to quaternary structure, forms a cylinder of 14 subunits composed of two heptameric rings stacked back-to-back. Interacts with the co-chaperonin GroES.

It is found in the cytoplasm. It carries out the reaction ATP + H2O + a folded polypeptide = ADP + phosphate + an unfolded polypeptide.. Functionally, together with its co-chaperonin GroES, plays an essential role in assisting protein folding. The GroEL-GroES system forms a nano-cage that allows encapsulation of the non-native substrate proteins and provides a physical environment optimized to promote and accelerate protein folding. In Granulibacter bethesdensis (strain ATCC BAA-1260 / CGDNIH1), this protein is Chaperonin GroEL.